Consider the following 297-residue polypeptide: Pyridoxal 5'-phosphate synthase subunit SNZ1 (297 aa).

Aspartate 23 lines the D-ribose 5-phosphate pocket. Lysine 80 serves as the catalytic Schiff-base intermediate with D-ribose 5-phosphate. D-ribose 5-phosphate is bound at residue glycine 152. Arginine 164 serves as a coordination point for D-glyceraldehyde 3-phosphate. Residues glycine 214 and 235–236 (GS) each bind D-ribose 5-phosphate.

It belongs to the PdxS/SNZ family. As to quaternary structure, homohexamer. Interacts with AIM18.

The enzyme catalyses aldehydo-D-ribose 5-phosphate + D-glyceraldehyde 3-phosphate + L-glutamine = pyridoxal 5'-phosphate + L-glutamate + phosphate + 3 H2O + H(+). Its pathway is cofactor biosynthesis; pyridoxal 5'-phosphate biosynthesis. Functionally, catalyzes the formation of pyridoxal 5'-phosphate from ribose 5-phosphate (RBP), glyceraldehyde 3-phosphate (G3P) and ammonia. The ammonia is provided by a SNO isoform. Can also use ribulose 5-phosphate and dihydroxyacetone phosphate as substrates, resulting from enzyme-catalyzed isomerization of RBP and G3P, respectively. The sequence is that of Pyridoxal 5'-phosphate synthase subunit SNZ1 (SNZ1) from Saccharomyces cerevisiae (strain ATCC 204508 / S288c) (Baker's yeast).